A 347-amino-acid polypeptide reads, in one-letter code: UDP-3-O-acylglucosamine N-acyltransferase (347 aa).

The active-site Proton acceptor is His241.

This sequence belongs to the transferase hexapeptide repeat family. LpxD subfamily. Homotrimer.

The enzyme catalyses a UDP-3-O-[(3R)-3-hydroxyacyl]-alpha-D-glucosamine + a (3R)-hydroxyacyl-[ACP] = a UDP-2-N,3-O-bis[(3R)-3-hydroxyacyl]-alpha-D-glucosamine + holo-[ACP] + H(+). Its pathway is bacterial outer membrane biogenesis; LPS lipid A biosynthesis. Its function is as follows. Catalyzes the N-acylation of UDP-3-O-acylglucosamine using 3-hydroxyacyl-ACP as the acyl donor. Is involved in the biosynthesis of lipid A, a phosphorylated glycolipid that anchors the lipopolysaccharide to the outer membrane of the cell. The sequence is that of UDP-3-O-acylglucosamine N-acyltransferase from Nitrosococcus oceani (strain ATCC 19707 / BCRC 17464 / JCM 30415 / NCIMB 11848 / C-107).